The sequence spans 352 residues: Protein RecA (352 aa).

68 to 75 (GPESSGKT) lines the ATP pocket.

Belongs to the RecA family.

The protein localises to the cytoplasm. Functionally, can catalyze the hydrolysis of ATP in the presence of single-stranded DNA, the ATP-dependent uptake of single-stranded DNA by duplex DNA, and the ATP-dependent hybridization of homologous single-stranded DNAs. It interacts with LexA causing its activation and leading to its autocatalytic cleavage. The chain is Protein RecA from Clostridium perfringens (strain SM101 / Type A).